Consider the following 405-residue polypeptide: Phosphopentomutase (405 aa).

Mn(2+) is bound by residues D10, D303, H308, D344, H345, and H356.

Belongs to the phosphopentomutase family. It depends on Mn(2+) as a cofactor.

The protein localises to the cytoplasm. The catalysed reaction is 2-deoxy-alpha-D-ribose 1-phosphate = 2-deoxy-D-ribose 5-phosphate. It catalyses the reaction alpha-D-ribose 1-phosphate = D-ribose 5-phosphate. The protein operates within carbohydrate degradation; 2-deoxy-D-ribose 1-phosphate degradation; D-glyceraldehyde 3-phosphate and acetaldehyde from 2-deoxy-alpha-D-ribose 1-phosphate: step 1/2. Isomerase that catalyzes the conversion of deoxy-ribose 1-phosphate (dRib-1-P) and ribose 1-phosphate (Rib-1-P) to deoxy-ribose 5-phosphate (dRib-5-P) and ribose 5-phosphate (Rib-5-P), respectively. This chain is Phosphopentomutase, found in Shewanella frigidimarina (strain NCIMB 400).